The primary structure comprises 481 residues: Aspartyl/glutamyl-tRNA(Asn/Gln) amidotransferase subunit B (481 aa).

It belongs to the GatB/GatE family. GatB subfamily. As to quaternary structure, heterotrimer of A, B and C subunits.

It carries out the reaction L-glutamyl-tRNA(Gln) + L-glutamine + ATP + H2O = L-glutaminyl-tRNA(Gln) + L-glutamate + ADP + phosphate + H(+). The catalysed reaction is L-aspartyl-tRNA(Asn) + L-glutamine + ATP + H2O = L-asparaginyl-tRNA(Asn) + L-glutamate + ADP + phosphate + 2 H(+). Its function is as follows. Allows the formation of correctly charged Asn-tRNA(Asn) or Gln-tRNA(Gln) through the transamidation of misacylated Asp-tRNA(Asn) or Glu-tRNA(Gln) in organisms which lack either or both of asparaginyl-tRNA or glutaminyl-tRNA synthetases. The reaction takes place in the presence of glutamine and ATP through an activated phospho-Asp-tRNA(Asn) or phospho-Glu-tRNA(Gln). The polypeptide is Aspartyl/glutamyl-tRNA(Asn/Gln) amidotransferase subunit B (Pseudomonas syringae pv. tomato (strain ATCC BAA-871 / DC3000)).